The following is a 270-amino-acid chain: Interleukin-2 receptor subunit alpha (270 aa).

The signal sequence occupies residues 1–21 (MEPSLLMWGFFTFTMIPGCMA). In terms of domain architecture, Sushi 1 spans 22 to 84 (GACVQQPPSL…FWENKCQCMP (63 aa)). Topologically, residues 22–245 (GACVQQPPSL…QPIIFTTQYQ (224 aa)) are extracellular. Intrachain disulfides connect cysteine 24–cysteine 67, cysteine 49–cysteine 80, and cysteine 51–cysteine 82. Asparagine 33 and asparagine 70 each carry an N-linked (GlcNAc...) asparagine glycan. A disordered region spans residues 87 to 124 (SPRIPVKQVTPRPEEQKERKTTETQGQMQPPNQANLPG). Residues 98–108 (RPEEQKERKTT) are compositionally biased toward basic and acidic residues. Over residues 112-121 (GQMQPPNQAN) the composition is skewed to polar residues. The region spanning 124–191 (GHCKEPPPWE…WTQPKLKCKS (68 aa)) is the Sushi 2 domain. Cystine bridges form between cysteine 126–cysteine 171 and cysteine 153–cysteine 189. 2 N-linked (GlcNAc...) asparagine glycosylation sites follow: asparagine 164 and asparagine 195. The interval 190–225 (KSEKENGSFPEPQMSTAAPPTTKTSLPTRTKGTTDS) is disordered. A compositionally biased stretch (polar residues) spans 202 to 225 (QMSTAAPPTTKTSLPTRTKGTTDS). Residue asparagine 227 is glycosylated (N-linked (GlcNAc...) asparagine). The chain crosses the membrane as a helical span at residues 246–264 (LAVAGCVLLLLSILLLSGL). The Cytoplasmic portion of the chain corresponds to 265 to 270 (TWQRRR).

As to quaternary structure, non-covalent dimer of an alpha and a beta subunit. IL2R exists in 3 different forms: a high affinity dimer, an intermediate affinity monomer (beta subunit), and a low affinity monomer (alpha subunit). The high and intermediate affinity forms also associate with a gamma subunit.

The protein resides in the membrane. Functionally, receptor for interleukin-2. The receptor is involved in the regulation of immune tolerance by controlling regulatory T cells (TREGs) activity. TREGs suppress the activation and expansion of autoreactive T-cells. The sequence is that of Interleukin-2 receptor subunit alpha (IL2RA) from Sus scrofa (Pig).